Reading from the N-terminus, the 240-residue chain is Orotidine 5'-phosphate decarboxylase (240 aa).

Substrate contacts are provided by residues Asp10, Lys33, 60-69 (DLKLHDIPNT), Thr123, Arg185, Gln194, Gly214, and Arg215. The Proton donor role is filled by Lys62.

Belongs to the OMP decarboxylase family. Type 1 subfamily. In terms of assembly, homodimer.

The catalysed reaction is orotidine 5'-phosphate + H(+) = UMP + CO2. Its pathway is pyrimidine metabolism; UMP biosynthesis via de novo pathway; UMP from orotate: step 2/2. Its function is as follows. Catalyzes the decarboxylation of orotidine 5'-monophosphate (OMP) to uridine 5'-monophosphate (UMP). This is Orotidine 5'-phosphate decarboxylase from Lactobacillus delbrueckii subsp. bulgaricus (strain ATCC 11842 / DSM 20081 / BCRC 10696 / JCM 1002 / NBRC 13953 / NCIMB 11778 / NCTC 12712 / WDCM 00102 / Lb 14).